A 224-amino-acid polypeptide reads, in one-letter code: UPF0758 protein VIBHAR_00653 (224 aa).

Residues 102-224 (ALTSPEQTKL…SVSFAERGWI (123 aa)) enclose the MPN domain. Zn(2+)-binding residues include histidine 173, histidine 175, and aspartate 186. The JAMM motif signature appears at 173–186 (HNHPSGVAEPSQAD).

It belongs to the UPF0758 family.

The polypeptide is UPF0758 protein VIBHAR_00653 (Vibrio campbellii (strain ATCC BAA-1116)).